Consider the following 427-residue polypeptide: Histidinol dehydrogenase (427 aa).

Substrate-binding residues include Ser-232, Gln-254, and His-257. Gln-254 and His-257 together coordinate Zn(2+). Catalysis depends on proton acceptor residues Glu-322 and His-323. Substrate contacts are provided by His-323, Asp-356, Glu-410, and His-415. A Zn(2+)-binding site is contributed by Asp-356. His-415 contributes to the Zn(2+) binding site.

The protein belongs to the histidinol dehydrogenase family. It depends on Zn(2+) as a cofactor.

The catalysed reaction is L-histidinol + 2 NAD(+) + H2O = L-histidine + 2 NADH + 3 H(+). Its pathway is amino-acid biosynthesis; L-histidine biosynthesis; L-histidine from 5-phospho-alpha-D-ribose 1-diphosphate: step 9/9. Catalyzes the sequential NAD-dependent oxidations of L-histidinol to L-histidinaldehyde and then to L-histidine. The sequence is that of Histidinol dehydrogenase from Listeria monocytogenes serovar 1/2a (strain ATCC BAA-679 / EGD-e).